The sequence spans 332 residues: Gibberellin 2-beta-dioxygenase (332 aa).

Positions 175 to 280 constitute a Fe2OG dioxygenase domain; sequence KSDSCFRLNH…RLSMIYFGGP (106 aa). Residues H204, D206, and H261 each coordinate Fe cation. Residue R271 is part of the active site.

The protein belongs to the iron/ascorbate-dependent oxidoreductase family. GA2OX subfamily. Requires Fe cation as cofactor.

The enzyme catalyses gibberellin A1 + 2-oxoglutarate + O2 = gibberellin A8 + succinate + CO2. The protein operates within plant hormone biosynthesis; gibberellin biosynthesis. Catalyzes the 2-beta-hydroxylation of several biologically active gibberellins, leading to the homeostatic regulation of their endogenous level. Catabolism of gibberellins (GAs) plays a central role in plant development. Converts GA9/GA20 to GA51/GA29 and GA4/GA1 to GA34/GA8. The chain is Gibberellin 2-beta-dioxygenase (GA2OX1) from Phaseolus coccineus (Scarlet runner bean).